The following is a 981-amino-acid chain: Protein deadlock (981 aa).

Residues 1 to 60 (MEKLDKIRMSQKLSCWQHILTTLGTSSKTEQEWNTFFKGFLESWRKPYCIQTSCDPSIPL) form a required for interaction with rhi/rhino region. Disordered stretches follow at residues 72 to 195 (LQEN…ACAP), 274 to 307 (IMDKPKNKQQPQTPPPFLLNNEYTESSDDSDDQL), 327 to 352 (SRNEDCSPAPEKVKLKGERPAQNKKE), 375 to 446 (LRKS…PNNI), 554 to 586 (GLDDENVPEDEPRKEAKTAEQLPKPEPSTETLK), and 642 to 662 (LVHQPLAESNRNQRDEATAAR). Polar residues-rich tracts occupy residues 104-113 (PSKSHSTGST) and 150-160 (NHTTSIFSKAQ). Residues 167 to 191 (KLSSTKKRPDTCAPTDDSRKNREPR) are compositionally biased toward basic and acidic residues. Residues 337–352 (EKVKLKGERPAQNKKE) are compositionally biased toward basic and acidic residues. Basic residues predominate over residues 377-390 (KSVKKSAKQQKPRV). The span at 409 to 419 (TQDKQSTHEMI) shows a compositional bias: basic and acidic residues. Positions 422–446 (QAKTISEASGQQTSQVQSSLSPNNI) are enriched in polar residues. The span at 652 to 662 (RNQRDEATAAR) shows a compositional bias: basic and acidic residues.

As to quaternary structure, component of the Rhino-Deadlock-Cutoff (RDC) complex, composed of rhi/rhino, del/deadlock and cuff/cutoff. Interacts (via N-terminus) with rhi/rhino (via C-terminus); this interaction is direct. Interacts (via C-terminus) with cuff/cutoff; this interaction is direct.

Its subcellular location is the nucleus. The protein resides in the cytoplasm. It localises to the cytoskeleton. It is found in the microtubule organizing center. The protein localises to the centrosome. Its subcellular location is the chromosome. Functionally, developmental protein involved in oogenesis. Required for germline maintenance, stability of mitotic spindles, localization of patterning determinants, oocyte growth and fusome biogenesis in males and females. Also required for dorso-ventral and antero-posterior patterning of oocyte and eggshell. May be involved in microtubule function during oogenesis. Part of a rhi-dependent transcription machinery that enables the generation of piRNA precursors from heterochromatin while maintaining the suppression of transposon-encoded promoters and enhancers. Component of the RDC complex (rhi, del and cuff) which binds to repressive H3K9me3 marks in the piRNA clusters. RDC promotes the bidirectional transcription of piRNA clusters at these sites by interacting with Moonshiner which forms a complex with the transcription initiation factors TfIIA-S and Trf2. This mechanism allows transcription to occur in piRNA clusters despite the lack of proper promoter elements and in the presence of the repressive H3K9me3 mark. As part of the RDC complex, involved in suppression of splicing. The polypeptide is Protein deadlock (del) (Drosophila melanogaster (Fruit fly)).